Reading from the N-terminus, the 405-residue chain is Type II secretion system protein F (405 aa).

Topologically, residues 1 to 169 are cytoplasmic; sequence MPLYRYKALD…SRALKGKVIN (169 aa). Positions 98, 151, and 155 each coordinate Ca(2+). The chain crosses the membrane as a helical span at residues 170–190; sequence ALIYPAILLAVVGCALLFLLG. Residues 191–218 are Periplasmic-facing; that stretch reads YVVPQFAQMYESLDVALPWFTQAVLSVG. A helical membrane pass occupies residues 219–239; the sequence is LLVRDWWLVLVVIPGVLGLWL. The Cytoplasmic segment spans residues 240 to 370; it reads DRKRRNAAFR…LETAQAIDRA (131 aa). A helical membrane pass occupies residues 371 to 391; the sequence is LAALVPLITLVLASVVGLVII. Residues 392–405 are Periplasmic-facing; that stretch reads SVLVPLYDLTNAIG.

Belongs to the GSP F family. As to quaternary structure, type II secretion system is composed of four main components: the outer membrane complex, the inner membrane complex, the cytoplasmic secretion ATPase and the periplasm-spanning pseudopilus. Homodimer. Interacts with XpsE and XpsL components.

Its subcellular location is the cell inner membrane. Its function is as follows. Component of the type II secretion system inner membrane complex required for the energy-dependent secretion of extracellular factors such as proteases and toxins from the periplasm. This Xanthomonas campestris pv. campestris (strain ATCC 33913 / DSM 3586 / NCPPB 528 / LMG 568 / P 25) protein is Type II secretion system protein F (xpsF).